A 164-amino-acid chain; its full sequence is Arginine repressor (164 aa).

Belongs to the ArgR family.

The protein localises to the cytoplasm. It functions in the pathway amino-acid biosynthesis; L-arginine biosynthesis [regulation]. In terms of biological role, regulates arginine biosynthesis genes. This chain is Arginine repressor, found in Mycolicibacterium paratuberculosis (strain ATCC BAA-968 / K-10) (Mycobacterium paratuberculosis).